Consider the following 688-residue polypeptide: Methionine--tRNA ligase (688 aa).

The short motif at P13–H23 is the 'HIGH' region element. The Zn(2+) site is built by C144, C147, C157, and C160. The 'KMSKS' region motif lies at K342 to S346. K345 is an ATP binding site. The tRNA-binding domain maps to D582–H688.

Belongs to the class-I aminoacyl-tRNA synthetase family. MetG type 1 subfamily. Homodimer. Requires Zn(2+) as cofactor.

It localises to the cytoplasm. The enzyme catalyses tRNA(Met) + L-methionine + ATP = L-methionyl-tRNA(Met) + AMP + diphosphate. Its function is as follows. Is required not only for elongation of protein synthesis but also for the initiation of all mRNA translation through initiator tRNA(fMet) aminoacylation. The sequence is that of Methionine--tRNA ligase from Acidovorax ebreus (strain TPSY) (Diaphorobacter sp. (strain TPSY)).